We begin with the raw amino-acid sequence, 61 residues long: Lens epithelial cell protein LEP503 (61 aa).

As to expression, restricted to lens epithelial cells.

In terms of biological role, may play a role in lens epithelial cell differentiation. The protein is Lens epithelial cell protein LEP503 (LENEP) of Homo sapiens (Human).